The primary structure comprises 899 residues: 1,4-alpha-glucan-branching enzyme 3, chloroplastic/amyloplastic (899 aa).

The transit peptide at 1–49 directs the protein to the chloroplast; the sequence is MVSLSNQTRFSFHPNNLVVSEKRRLGISGVNFPRKIKLKITCFAAERPR. Residues 47–67 are disordered; it reads RPRQEKQKKKSQSQSTSDAEA. Catalysis depends on E612, which acts as the Proton donor.

This sequence belongs to the glycosyl hydrolase 13 family. GlgB subfamily. In terms of assembly, monomer. As to expression, mostly expressed in flowers and inflorescence, and, to a lower extent, in seedlings, roots, stems, leaves, siliques and seeds.

It is found in the plastid. The protein localises to the chloroplast stroma. Its subcellular location is the amyloplast. The catalysed reaction is Transfers a segment of a (1-&gt;4)-alpha-D-glucan chain to a primary hydroxy group in a similar glucan chain.. The protein operates within glycan biosynthesis; starch biosynthesis. Its function is as follows. Catalyzes the formation of the alpha-1,6-glucosidic linkages in starch by scission of a 1,4-alpha-linked oligosaccharide from growing alpha-1,4-glucan chains and the subsequent attachment of the oligosaccharide to the alpha-1,6 position. Essential during embryogenesis. This chain is 1,4-alpha-glucan-branching enzyme 3, chloroplastic/amyloplastic (SBE3), found in Arabidopsis thaliana (Mouse-ear cress).